The primary structure comprises 383 residues: L-Ala-D/L-Glu epimerase (383 aa).

Substrate contacts are provided by residues Arg68, Tyr94, and 198 to 200 (KVK). Mg(2+) is bound by residues Asp224, Glu251, and Asp276. Substrate is bound by residues Lys298, 326-328 (CMT), and 348-350 (DLD).

It belongs to the mandelate racemase/muconate lactonizing enzyme family. Mg(2+) serves as cofactor.

It carries out the reaction L-alanyl-L-glutamate = L-alanyl-D-glutamate. In terms of biological role, catalyzes the epimerization of L-Ala-D-Glu to L-Ala-L-Glu and may play a role in the metabolism of the murein peptide, of which L-Ala-D-Glu is a component. Is also able to catalyze the epimerization of L-Ala-D-Asp, L-Ala-L-Glu, L-Ala-L-Ser, L-Ala-L-Pro, L-Ala-L-L-Val, L-Ala-L-Thr, L-Ala-L-Leu, L-Ala-L-Ile and L-Gly-L-Glu (in vitro). This chain is L-Ala-D/L-Glu epimerase, found in Bacteroides thetaiotaomicron (strain ATCC 29148 / DSM 2079 / JCM 5827 / CCUG 10774 / NCTC 10582 / VPI-5482 / E50).